The sequence spans 347 residues: MIKLRKNIANMAGYVPGYQPEDPAAYIKLNTNENSYPPSPKVIEAIIAEVGEGLKRYPDAASRAAREAAAELYGFPPEWVIMANGSDEVLNNLIRAFADEGDEIAFVYPSYSYYATLAEVQGARVKTFGLTEDWKLKDFPKIYEGRIFFLTNPNAPLGFTFSQTYIEELAGRVSGTLVIDETYADFAEVTSLELVRKYDNVVVTRTFSKSYSLAGMRLGLAVARPEVISALDKIRDHYNLDRLAQAAAVAALHDQEYLRETVGKIQETRQWFCDQLGKLGYTVIPSHGNYVFATPPDRNGERIYQGLFDRKILVRHFSDPNLAHGLRISIGTQAEMEKTIVALVEIG.

An N6-(pyridoxal phosphate)lysine modification is found at Lys-209.

This sequence belongs to the class-II pyridoxal-phosphate-dependent aminotransferase family. Histidinol-phosphate aminotransferase subfamily. Homodimer. Pyridoxal 5'-phosphate serves as cofactor.

It catalyses the reaction L-histidinol phosphate + 2-oxoglutarate = 3-(imidazol-4-yl)-2-oxopropyl phosphate + L-glutamate. It functions in the pathway amino-acid biosynthesis; L-histidine biosynthesis; L-histidine from 5-phospho-alpha-D-ribose 1-diphosphate: step 7/9. In Geotalea daltonii (strain DSM 22248 / JCM 15807 / FRC-32) (Geobacter daltonii), this protein is Histidinol-phosphate aminotransferase.